Here is a 525-residue protein sequence, read N- to C-terminus: GMP synthase [glutamine-hydrolyzing] (525 aa).

Residues 9–207 form the Glutamine amidotransferase type-1 domain; sequence RILILDFGSQ…ILDICGCEAL (199 aa). Cysteine 86 acts as the Nucleophile in catalysis. Residues histidine 181 and glutamate 183 contribute to the active site. Positions 208 to 400 constitute a GMPS ATP-PPase domain; sequence WTPSKIAEDA…LGLPYDMVYR (193 aa). 235-241 contributes to the ATP binding site; the sequence is SGGVDSS.

Homodimer.

The catalysed reaction is XMP + L-glutamine + ATP + H2O = GMP + L-glutamate + AMP + diphosphate + 2 H(+). Its pathway is purine metabolism; GMP biosynthesis; GMP from XMP (L-Gln route): step 1/1. In terms of biological role, catalyzes the synthesis of GMP from XMP. This is GMP synthase [glutamine-hydrolyzing] from Pseudomonas fluorescens (strain ATCC BAA-477 / NRRL B-23932 / Pf-5).